We begin with the raw amino-acid sequence, 346 residues long: Haptoglobin-related protein (346 aa).

The segment at residues 1 to 16 is a signal peptide (not cleaved); it reads DLGAVIYLLLWGRQLF. The Sushi domain maps to 32 to 85; the sequence is FPKPPEIANGYVEHLFRYQRKNYYRLRTEGDGVYTLNDKKQWINKAVGDKLPEC. The Peptidase S1 domain occupies 102-344; the sequence is ILGGHLDAKG…IHVWVQKTIA (243 aa). Intrachain disulfides connect cysteine 249–cysteine 280 and cysteine 291–cysteine 321.

It belongs to the peptidase S1 family.

The protein resides in the secreted. Functionally, primate-specific plasma protein associated with apolipoprotein L-I (apoL-I)-containing high-density lipoprotein (HDL). Binds hemoglobin with high affinity and may contribute to the clearance of cell-free hemoglobin to allow hepatic recycling of heme iron. The chain is Haptoglobin-related protein (HPR) from Pan troglodytes (Chimpanzee).